A 644-amino-acid chain; its full sequence is 1-deoxy-D-xylulose-5-phosphate synthase (644 aa).

Thiamine diphosphate is bound by residues H72 and 113–115; that span reads GHA. Residue D144 coordinates Mg(2+). Residues 145 to 146, N174, Y287, and E370 contribute to the thiamine diphosphate site; that span reads GA. Residue N174 coordinates Mg(2+).

It belongs to the transketolase family. DXPS subfamily. As to quaternary structure, homodimer. Requires Mg(2+) as cofactor. Thiamine diphosphate is required as a cofactor.

It carries out the reaction D-glyceraldehyde 3-phosphate + pyruvate + H(+) = 1-deoxy-D-xylulose 5-phosphate + CO2. It participates in metabolic intermediate biosynthesis; 1-deoxy-D-xylulose 5-phosphate biosynthesis; 1-deoxy-D-xylulose 5-phosphate from D-glyceraldehyde 3-phosphate and pyruvate: step 1/1. In terms of biological role, catalyzes the acyloin condensation reaction between C atoms 2 and 3 of pyruvate and glyceraldehyde 3-phosphate to yield 1-deoxy-D-xylulose-5-phosphate (DXP). This Prochlorococcus marinus (strain MIT 9313) protein is 1-deoxy-D-xylulose-5-phosphate synthase.